The following is a 440-amino-acid chain: MLGWNKHVFFSESRINFRCLLRKKLKKRCPLSARFVLVLLLIVLIFILKMGYKQLIYKLNHPPLRRIDERNDPLFSNGCKNVHLEAQLHPRMNATFVMLARNSDLPGVVSSINSLEKHFNRHFNYPYTFLNDEPFDEKFKETILKLTSANVEFGTLEKDTFGFPGNVDVDAAREAIASQGDRGIMYGDTESYHHMCRFFSGFFYKHPLLLKYQWYWRVEPDVAFTCDISYDPFYYMEENGKIYGYVVALKELEDTVPNLFRYTSAYRRNNNLTSNMWKFFLDAPKKENYDISRKDPTVGLSFSSHLNAMIDSSYSAETSSMEGESYNMCHFWSNFEIANFKFFRNEQYENFFRTMDATGGFWTERWGDAPFHSLAAGLFLSKEQVHYFRDLGYRHSDIHHCGQSLGCNCECIPELSEIESTSGGCVTQWVNLIGDGFLDE.

Residues 1 to 35 lie on the Cytoplasmic side of the membrane; it reads MLGWNKHVFFSESRINFRCLLRKKLKKRCPLSARF. The chain crosses the membrane as a helical; Signal-anchor for type II membrane protein span at residues 36–56; the sequence is VLVLLLIVLIFILKMGYKQLI. The Lumenal portion of the chain corresponds to 57-440; that stretch reads YKLNHPPLRR…NLIGDGFLDE (384 aa). The Nucleophile role is filled by Glu336.

This sequence belongs to the glycosyltransferase 15 family.

The protein resides in the cytoplasm. It is found in the nucleus. The protein localises to the golgi apparatus membrane. Functionally, probable mannosyltransferase involved in O-glycosylation of cell wall and secreted proteins. Transfers an alpha-D-mannosyl residue from GDP-mannose into lipid-linked oligosaccharide, forming an alpha-(1-&gt;2)-D-mannosyl-D-mannose linkage. This chain is O-glycoside alpha-1,2-mannosyltransferase homolog 4 (omh4), found in Schizosaccharomyces pombe (strain 972 / ATCC 24843) (Fission yeast).